Here is a 543-residue protein sequence, read N- to C-terminus: Tetrahydroberberine oxidase (543 aa).

The first 26 residues, 1–26 (MIPNSSSSSILSLLVLLLFSTSSSWA), serve as a signal peptide directing secretion. Cys-37 and Cys-97 form a disulfide bridge. Residues Asn-54, Asn-74, Asn-135, Asn-142, Asn-162, Asn-295, Asn-335, Asn-440, and Asn-482 are each glycosylated (N-linked (GlcNAc...) asparagine). The region spanning 75-250 (STQKPEFIIT…LSWKVKLVPV (176 aa)) is the FAD-binding PCMH-type domain. The segment at residues 112–175 (HDVEGLSYVS…NTLGFPAGFC (64 aa)) is a cross-link (6-(S-cysteinyl)-8alpha-(pros-histidyl)-FAD (His-Cys)).

The protein belongs to the oxygen-dependent FAD-linked oxidoreductase family. Requires FAD as cofactor. In terms of processing, the FAD cofactor is bound via a bicovalent 6-S-cysteinyl, 8alpha-N1-histidyl FAD linkage.

The catalysed reaction is (S)-canadine + 2 O2 + H(+) = berberine + 2 H2O2. Its function is as follows. Catalyzes the oxidation of different tetrahydroprotoberberines, such as (S)-canadine, (S)-scoulerine and (S)-tetrahydropalmatine. The polypeptide is Tetrahydroberberine oxidase (Argemone mexicana (Mexican prickly poppy)).